A 199-amino-acid chain; its full sequence is Probable nicotinate-nucleotide adenylyltransferase (199 aa).

It belongs to the NadD family.

The catalysed reaction is nicotinate beta-D-ribonucleotide + ATP + H(+) = deamido-NAD(+) + diphosphate. Its pathway is cofactor biosynthesis; NAD(+) biosynthesis; deamido-NAD(+) from nicotinate D-ribonucleotide: step 1/1. Its function is as follows. Catalyzes the reversible adenylation of nicotinate mononucleotide (NaMN) to nicotinic acid adenine dinucleotide (NaAD). This is Probable nicotinate-nucleotide adenylyltransferase from Roseobacter denitrificans (strain ATCC 33942 / OCh 114) (Erythrobacter sp. (strain OCh 114)).